The sequence spans 369 residues: tRNA pseudouridine synthase D (369 aa).

Residue Asp80 is the Nucleophile of the active site. Positions 156 to 318 (GIPNWFGEQR…LKQERRALRL (163 aa)) constitute a TRUD domain.

Belongs to the pseudouridine synthase TruD family.

It carries out the reaction uridine(13) in tRNA = pseudouridine(13) in tRNA. Its function is as follows. Responsible for synthesis of pseudouridine from uracil-13 in transfer RNAs. In Xanthomonas axonopodis pv. citri (strain 306), this protein is tRNA pseudouridine synthase D.